Here is a 111-residue protein sequence, read N- to C-terminus: Secreted RxLR effector protein 82 (111 aa).

The N-terminal stretch at 1–17 (MFHLYLLLVFETRYTCL) is a signal peptide. Residues 28–31 (RWLR) carry the RxLR motif.

It belongs to the RxLR effector family.

The protein localises to the secreted. The protein resides in the host nucleus. Functionally, secreted effector that acts as an elicitor that induces cell death in host plant cells. This chain is Secreted RxLR effector protein 82, found in Plasmopara viticola (Downy mildew of grapevine).